The primary structure comprises 345 residues: S-adenosylmethionine:tRNA ribosyltransferase-isomerase (345 aa).

The protein belongs to the QueA family. Monomer.

It localises to the cytoplasm. It catalyses the reaction 7-aminomethyl-7-carbaguanosine(34) in tRNA + S-adenosyl-L-methionine = epoxyqueuosine(34) in tRNA + adenine + L-methionine + 2 H(+). It functions in the pathway tRNA modification; tRNA-queuosine biosynthesis. Functionally, transfers and isomerizes the ribose moiety from AdoMet to the 7-aminomethyl group of 7-deazaguanine (preQ1-tRNA) to give epoxyqueuosine (oQ-tRNA). This is S-adenosylmethionine:tRNA ribosyltransferase-isomerase from Acinetobacter baumannii (strain ATCC 17978 / DSM 105126 / CIP 53.77 / LMG 1025 / NCDC KC755 / 5377).